The following is a 142-amino-acid chain: Large ribosomal subunit protein uL13 (142 aa).

This sequence belongs to the universal ribosomal protein uL13 family. In terms of assembly, part of the 50S ribosomal subunit.

Its function is as follows. This protein is one of the early assembly proteins of the 50S ribosomal subunit, although it is not seen to bind rRNA by itself. It is important during the early stages of 50S assembly. The protein is Large ribosomal subunit protein uL13 of Leptothrix cholodnii (strain ATCC 51168 / LMG 8142 / SP-6) (Leptothrix discophora (strain SP-6)).